The following is a 207-amino-acid chain: Outer-membrane lipoprotein LolB (207 aa).

An N-terminal signal peptide occupies residues 1 to 21 (MTLPDFRLIRLLPLASLVLTA). The N-palmitoyl cysteine moiety is linked to residue Cys22. The S-diacylglycerol cysteine moiety is linked to residue Cys22.

It belongs to the LolB family. As to quaternary structure, monomer.

The protein resides in the cell outer membrane. Functionally, plays a critical role in the incorporation of lipoproteins in the outer membrane after they are released by the LolA protein. This Salmonella typhi protein is Outer-membrane lipoprotein LolB.